Here is a 571-residue protein sequence, read N- to C-terminus: CDT1-like protein a, chloroplastic (571 aa).

The N-terminal 79 residues, 1-79 (MSTPGSSRSI…GSRRRSEDPV (79 aa)), are a transit peptide targeting the chloroplast. 2 disordered regions span residues 1–110 (MSTP…EKEK) and 288–315 (TTSS…TPAK). The segment covering 22 to 38 (SPSSKSQTGNPNPSSVA) has biased composition (polar residues). Low complexity predominate over residues 81-96 (SSAKSRLFFDSSSSSP). Residues 288–302 (TTSSLAKPTSSQINI) are compositionally biased toward polar residues. Residues 303–315 (APTPTKPTSTPAK) are compositionally biased toward low complexity.

It belongs to the Cdt1 family. As to quaternary structure, binds to ARC6. Phosphorylated by cyclin D- and cyclin A-containing CDKA-1, and thus targeted to proteasome-mediated proteolysis. As to expression, expressed in proliferating (e.g. shoot and root apical meristems, organ primordia) and endoreplicating cells (e.g. guard cells and stomatal lineage, developing trichomes).

It is found in the plastid. The protein localises to the chloroplast. Its function is as follows. Member of the pre-replication complex. Component of the plastid division machinery. Promotes polyloidization and regulates endoreduplication. Involved in the coordination of cell and plastid division. The sequence is that of CDT1-like protein a, chloroplastic (CDT1A) from Arabidopsis thaliana (Mouse-ear cress).